We begin with the raw amino-acid sequence, 343 residues long: KRR1 small subunit processome component homolog (343 aa).

The KH domain occupies 126 to 194 (DIIKIGNLVH…VRDIVLETMN (69 aa)). Over residues 230 to 246 (KNKNISKRKQPKNKKPK) the composition is skewed to basic residues. The disordered stretch occupies residues 230-343 (KNKNISKRKQ…LMKANKKNRS (114 aa)). Basic and acidic residues-rich tracts occupy residues 272–303 (LNKEQKQAKKQQERSVKQAEAAKKQDERRNKD) and 318–331 (RPAETSKVDVDALK). Residues 272–341 (LNKEQKQAKK…AKLMKANKKN (70 aa)) are a coiled coil. The segment covering 333 to 343 (KLMKANKKNRS) has biased composition (basic residues).

This sequence belongs to the KRR1 family. Monomer. Component of the ribosomal small subunit (SSU) processome.

The protein localises to the nucleus. The protein resides in the nucleolus. Required for 40S ribosome biogenesis. Involved in nucleolar processing of pre-18S ribosomal RNA and ribosome assembly. Binds to RNA. Required for female germline development, cell viability during eye development and for survival of dividing cells and epithelial cells during early wing disk development. This Drosophila virilis (Fruit fly) protein is KRR1 small subunit processome component homolog.